We begin with the raw amino-acid sequence, 415 residues long: uncharacterized protein (415 aa).

A TRAM domain is found at M1–A52. [4Fe-4S] cluster is bound by residues C62, C68, C71, and C147. Residues Q252, Y279, E299, and D347 each coordinate S-adenosyl-L-methionine. The active-site Nucleophile is C373.

This sequence belongs to the class I-like SAM-binding methyltransferase superfamily. RNA M5U methyltransferase family.

This is an uncharacterized protein from Caulobacter vibrioides (strain ATCC 19089 / CIP 103742 / CB 15) (Caulobacter crescentus).